The sequence spans 149 residues: Stathmin (149 aa).

At Ala-2 the chain carries N-acetylalanine. Ser-4 bears the Phosphoserine mark. One can recognise an SLD domain in the interval 4-145; sequence SDIQVKELEK…NKESKDPADE (142 aa). Position 9 is an N6-acetyllysine (Lys-9). Residue Ser-16 is modified to Phosphoserine; by PKA. Ser-25 carries the post-translational modification Phosphoserine; by CDK1, MAPK1 and MAPK3. The segment at 27–46 is disordered; it reads RSKESVPDFPLSPPKKKDLS. Lys-29 carries the N6-methyllysine modification. Ser-31 carries the post-translational modification Phosphoserine. Phosphoserine; by CDK1, MAPK1 and MAPK3 is present on Ser-38. A coiled-coil region spans residues 41–140; it reads KKKDLSLEEI…EEVRKNKESK (100 aa). Ser-63 is modified (phosphoserine; by PKA). An N6-acetyllysine mark is found at Lys-100 and Lys-119. Residues 104-143 are compositionally biased toward basic and acidic residues; that stretch reads KMEANKENREAQMAAKLERLREKDKHVEEVRKNKESKDPA. The interval 104–149 is disordered; that stretch reads KMEANKENREAQMAAKLERLREKDKHVEEVRKNKESKDPADETEAD.

The protein belongs to the stathmin family. Binds to two alpha/beta-tubulin heterodimers. Interacts with KIST. In terms of processing, many different phosphorylated forms are observed depending on specific combinations among the sites which can be phosphorylated. MAPK is responsible for the phosphorylation of stathmin in response to NGF. Phosphorylation at Ser-16 seems to be required for neuron polarization. As to expression, highly expressed in the lateral nucleus of the amygdala.

The protein resides in the cytoplasm. It is found in the cytoskeleton. Its function is as follows. Involved in the regulation of the microtubule (MT) filament system by destabilizing microtubules. Prevents assembly and promotes disassembly of microtubules. Phosphorylation at Ser-16 may be required for axon formation during neurogenesis. Involved in the control of the learned and innate fear. The sequence is that of Stathmin (Stmn1) from Mus musculus (Mouse).